A 217-amino-acid polypeptide reads, in one-letter code: LexA repressor (217 aa).

The H-T-H motif DNA-binding region spans 28–48; that stretch reads RAEIAAEFGFSSPNAAEEHLR. Catalysis depends on for autocatalytic cleavage activity residues Ser136 and Lys173.

The protein belongs to the peptidase S24 family. As to quaternary structure, homodimer.

It catalyses the reaction Hydrolysis of Ala-|-Gly bond in repressor LexA.. In terms of biological role, represses a number of genes involved in the response to DNA damage (SOS response), including recA and lexA. In the presence of single-stranded DNA, RecA interacts with LexA causing an autocatalytic cleavage which disrupts the DNA-binding part of LexA, leading to derepression of the SOS regulon and eventually DNA repair. This chain is LexA repressor, found in Cupriavidus necator (strain ATCC 17699 / DSM 428 / KCTC 22496 / NCIMB 10442 / H16 / Stanier 337) (Ralstonia eutropha).